The primary structure comprises 867 residues: V-set and immunoglobulin domain-containing protein 10-like (867 aa).

The first 27 residues, 1-27 (MDNPQALPLFLLLASLVGILTLRASSG), serve as a signal peptide directing secretion. Topologically, residues 28 to 776 (LQQTNFSSAF…RAGPTLSHGA (749 aa)) are extracellular. Asparagine 32 carries N-linked (GlcNAc...) asparagine glycosylation. Low complexity predominate over residues 35 to 45 (SAFSSDSKSSS). A disordered region spans residues 35-60 (SAFSSDSKSSSQGLGVEVPSIKPPSW). N-linked (GlcNAc...) asparagine glycosylation is found at asparagine 88, asparagine 96, and asparagine 144. The tract at residues 104-186 (LSPVSPFSET…PESKFSAETH (83 aa)) is disordered. Polar residues predominate over residues 137–153 (TVKTPASNISTQVSHTK). The span at 159 to 170 (PDSKFSPDDMDL) shows a compositional bias: basic and acidic residues. Over residues 173-186 (SAQSPESKFSAETH) the composition is skewed to polar residues. Ig-like C2-type domains lie at 302-394 (PQLS…ADVS) and 402-487 (PTIT…SLLN). Residues cysteine 324 and cysteine 378 are joined by a disulfide bond. N-linked (GlcNAc...) asparagine glycosylation is present at asparagine 423. The cysteines at positions 428 and 471 are disulfide-linked. A glycan (N-linked (GlcNAc...) asparagine) is linked at asparagine 487. Residues 602 to 627 (ASGCPPPSRASWAREGRPLAPGGGSR) form a disordered region. 2 N-linked (GlcNAc...) asparagine glycosylation sites follow: asparagine 641 and asparagine 650. The helical transmembrane segment at 777–797 (IAGIVLGSLLGLALLAVLLLL) threads the bilayer. The Cytoplasmic segment spans residues 798 to 867 (CICCLCRFRG…QAQTPVQLSL (70 aa)).

In terms of tissue distribution, expressed in the esophagus, particularly in the suprabasilar layers of the epithelium. Expression is largely reduced in esophageal metaplasia, dysplasia, and adenocarcinoma lesions.

It localises to the membrane. In Homo sapiens (Human), this protein is V-set and immunoglobulin domain-containing protein 10-like (VSIG10L).